The sequence spans 290 residues: Porphobilinogen deaminase (290 aa).

Position 237 is an S-(dipyrrolylmethanemethyl)cysteine (Cys237).

The protein belongs to the HMBS family. In terms of assembly, monomer. Requires dipyrromethane as cofactor.

The catalysed reaction is 4 porphobilinogen + H2O = hydroxymethylbilane + 4 NH4(+). The protein operates within porphyrin-containing compound metabolism; protoporphyrin-IX biosynthesis; coproporphyrinogen-III from 5-aminolevulinate: step 2/4. Functionally, tetrapolymerization of the monopyrrole PBG into the hydroxymethylbilane pre-uroporphyrinogen in several discrete steps. This Clostridium botulinum (strain 657 / Type Ba4) protein is Porphobilinogen deaminase.